The sequence spans 445 residues: FAD-dependent monooxygenase sorC (445 aa).

The helical transmembrane segment at 8–28 (PFEVAIVGGGITGLALAVGLL) threads the bilayer. Residue N31 is glycosylated (N-linked (GlcNAc...) asparagine). The FAD site is built by E38 and R119. R201 is an active-site residue. FAD-binding residues include D323 and A336. N-linked (GlcNAc...) asparagine glycosylation occurs at N358.

Belongs to the paxM FAD-dependent monooxygenase family. FAD serves as cofactor.

Its subcellular location is the membrane. The protein operates within secondary metabolite biosynthesis. FAD-dependent monooxygenase; part of the gene cluster that mediates the biosynthesis of sorbicillinoids, a diverse group of yellow secondary metabolites that restrict growth of competing pathogenic fungi but not of bacteria. Sorbicillinoids biosynthesis requires the action of two PKSs. SorA iteratively combines three acetyl units and the growing chain is modified by the ketoacyl reductase subunit, and optional by the enoyl reductase subunit in the second cycle. The polyketide is then handed over to the PKS SorB, which adds three more acetyl units, and two methyl groups. SorB releases an aldehyde, which undergoes spontaneous cyclization resulting in the formation of sorbicillin or 2',3'-dihydrosorbicillin. The monooxygenase sorC oxidizes sorbicillin and 2',3'-dihydrosorbicillin to 2',3'-dihydrosorbicillinol and sorbicillinol, respectively. The oxidoreductase sorD further converts sorbicillinol into oxosorbicillinol. Sorbicillinol is the building block for the other sorbicillinoids such as disorbicillinol, bisvertinolon, and dihydrobisvertinolone. The polypeptide is FAD-dependent monooxygenase sorC (Penicillium rubens (strain ATCC 28089 / DSM 1075 / NRRL 1951 / Wisconsin 54-1255) (Penicillium chrysogenum)).